The sequence spans 721 residues: Exo beta-1,2-glucooligosaccharide sophorohydrolase (non-reducing end) (721 aa).

A signal peptide spans 1-18 (MKHIALLTTLLLSASLQA). The 235-residue stretch at 474 to 708 (NHKLIGWNET…LLWNLFMSHP (235 aa)) folds into the Glycoamylase-like domain.

In terms of assembly, monomer.

The protein localises to the periplasm. The catalysed reaction is [(1-&gt;2)-beta-D-glucosyl](n) + H2O = [(1-&gt;2)-beta-D-glucosyl](n-2) + sophorose. Catalyzes the hydrolysis of linear beta-1,2-glucan and beta-1,2-glucooligosaccharides with degrees of polymerization (DPs) greater than or equal to 4, to produce sophorose. The best substrates are tetra- and pentasaccharides. Acts as an exo-type enzyme that releases sophorose from the non-reducing end of the substrate. It cannot hydrolyze cyclic beta-1,2-glucans. The protein is Exo beta-1,2-glucooligosaccharide sophorohydrolase (non-reducing end) of Parabacteroides distasonis (strain ATCC 8503 / DSM 20701 / CIP 104284 / JCM 5825 / NCTC 11152).